The primary structure comprises 202 residues: Holliday junction branch migration complex subunit RuvA (202 aa).

The interval 1 to 65 is domain I; sequence MIAYVEGRLA…EDALELYGFA (65 aa). Positions 66–144 are domain II; that stretch reads TWDERQTFIV…VEDLPAAAPL (79 aa). Residues 145 to 155 are flexible linker; sequence VTGGAPGGVFR. A domain III region spans residues 155–202; the sequence is RDALAGLANLGYGEEEASHVLKEVLHGEPDLDVGGALRAALRALARGR.

This sequence belongs to the RuvA family. As to quaternary structure, homotetramer. Forms an RuvA(8)-RuvB(12)-Holliday junction (HJ) complex. HJ DNA is sandwiched between 2 RuvA tetramers; dsDNA enters through RuvA and exits via RuvB. An RuvB hexamer assembles on each DNA strand where it exits the tetramer. Each RuvB hexamer is contacted by two RuvA subunits (via domain III) on 2 adjacent RuvB subunits; this complex drives branch migration. In the full resolvosome a probable DNA-RuvA(4)-RuvB(12)-RuvC(2) complex forms which resolves the HJ.

It localises to the cytoplasm. Its function is as follows. The RuvA-RuvB-RuvC complex processes Holliday junction (HJ) DNA during genetic recombination and DNA repair, while the RuvA-RuvB complex plays an important role in the rescue of blocked DNA replication forks via replication fork reversal (RFR). RuvA specifically binds to HJ cruciform DNA, conferring on it an open structure. The RuvB hexamer acts as an ATP-dependent pump, pulling dsDNA into and through the RuvAB complex. HJ branch migration allows RuvC to scan DNA until it finds its consensus sequence, where it cleaves and resolves the cruciform DNA. In Nitratidesulfovibrio vulgaris (strain DP4) (Desulfovibrio vulgaris), this protein is Holliday junction branch migration complex subunit RuvA.